Consider the following 471-residue polypeptide: 3-isopropylmalate dehydratase large subunit (471 aa).

3 residues coordinate [4Fe-4S] cluster: cysteine 346, cysteine 406, and cysteine 409.

Belongs to the aconitase/IPM isomerase family. LeuC type 1 subfamily. Heterodimer of LeuC and LeuD. [4Fe-4S] cluster is required as a cofactor.

The catalysed reaction is (2R,3S)-3-isopropylmalate = (2S)-2-isopropylmalate. It participates in amino-acid biosynthesis; L-leucine biosynthesis; L-leucine from 3-methyl-2-oxobutanoate: step 2/4. Catalyzes the isomerization between 2-isopropylmalate and 3-isopropylmalate, via the formation of 2-isopropylmaleate. The protein is 3-isopropylmalate dehydratase large subunit of Bacillus pumilus (strain SAFR-032).